The chain runs to 131 residues: Global transcriptional regulator Spx (131 aa).

Residues 10–13 carry the CXXC motif; the sequence is CTSC. C10 and C13 are disulfide-bonded.

The protein belongs to the ArsC family. Spx subfamily. In terms of assembly, interacts with the C-terminal domain of the alpha subunit of the RNAP. A single Spx monomer interacts with RNAP to form the transcription activation complex. Interacts with the adapter protein SpxH/YjbH.

It localises to the cytoplasm. Its activity is regulated as follows. Under non-stress conditions, Spx is degraded by ClpXP and, to a lesser extent, by ClpCP. Efficient dedradation by ClpXP requires the adapter protein SpxH/YjbH. Binding to SpxH/YjbH reduces the overall conformational flexibility of Spx and stabilizes the C-terminal ClpX recognition region of Spx. In addition, activity is modulated by the formation of a disulfide bound within the N-terminal Cys-X-X-Cys (CXXC) motif, which is required for the transcriptional activation of trxA and trxB, or for the activation of msrAB operon expression following paraquat oxidative stress. However, it seems that formation of the disulfide bound is not essential for induction of all Spx-controlled genes, as for example the case of BSH biosynthesis genes. Similarly, induction of the Spx regulon during cell wall stress is not accompanied by oxidation of the disulfide switch, but requires Spx stabilization by the anti-adapter protein SpxO/YirB. In terms of biological role, global transcriptional regulator that plays a key role in stress response and exerts either positive or negative regulation of genes. Acts by interacting with the C-terminal domain of the alpha subunit of the RNA polymerase (RNAP). This interaction can enhance binding of RNAP to the promoter region of target genes and stimulate their transcription, or block interaction of RNAP with activator proteins and repress transcription. Exhibits no DNA-binding activity. Functionally, induces the expression of a large number of genes in response to a variety of stress conditions, such as disulfide, heat and cell wall stress, while concurrently repressing transcription of genes involved in various developmental and growth-related pathways during periods of extreme stress. Functions in the oxidative stress response via induction of the transcription of thioredoxin (trxA) and thioredoxin reductase (trxB) during thiol-specific oxidative (disulfide) stress. Mediates response to oxidative stress caused by paraquat (PQ) via induction of the methionine sulfoxide reductase genes, msrA and msrB. Also acts as a transcriptional activator of the bacillithiol (BSH) biosynthesis genes in response to oxidizing conditions and thio-reactive compounds. Involved in heat stress response and thermotolerance development, which results in diminished cellular protein aggregates. Plays an important adaptive role in the cell wall stress response. Participates in sulfate-dependent control of organosulfur metabolism. Negatively controls, via CymR, the expression of the organosulfur utilization operons ytmI, yxeI and ssu, and directly activates yrrT operon expression during growth in medium containing methionine as sole sulfur source. Negatively affects competence and sporulation. Inhibits biofilm formation in response to disulfide stress by repressing biofilm matrix genes. In Bacillus subtilis (strain 168), this protein is Global transcriptional regulator Spx.